We begin with the raw amino-acid sequence, 207 residues long: Urease accessory protein UreG (207 aa).

16–23 (GPVGSGKT) is a binding site for GTP.

The protein belongs to the SIMIBI class G3E GTPase family. UreG subfamily. As to quaternary structure, homodimer. UreD, UreF and UreG form a complex that acts as a GTP-hydrolysis-dependent molecular chaperone, activating the urease apoprotein by helping to assemble the nickel containing metallocenter of UreC. The UreE protein probably delivers the nickel.

It is found in the cytoplasm. In terms of biological role, facilitates the functional incorporation of the urease nickel metallocenter. This process requires GTP hydrolysis, probably effectuated by UreG. The polypeptide is Urease accessory protein UreG (Blochmanniella pennsylvanica (strain BPEN)).